A 204-amino-acid chain; its full sequence is Transcriptional regulator GfcR (204 aa).

Belongs to the purine/pyrimidine phosphoribosyltransferase family. GfcR subfamily.

This Methanoculleus marisnigri (strain ATCC 35101 / DSM 1498 / JR1) protein is Transcriptional regulator GfcR.